A 180-amino-acid polypeptide reads, in one-letter code: Large ribosomal subunit protein uL6 (180 aa).

This sequence belongs to the universal ribosomal protein uL6 family. Part of the 50S ribosomal subunit.

Functionally, this protein binds to the 23S rRNA, and is important in its secondary structure. It is located near the subunit interface in the base of the L7/L12 stalk, and near the tRNA binding site of the peptidyltransferase center. The polypeptide is Large ribosomal subunit protein uL6 (Flavobacterium johnsoniae (strain ATCC 17061 / DSM 2064 / JCM 8514 / BCRC 14874 / CCUG 350202 / NBRC 14942 / NCIMB 11054 / UW101) (Cytophaga johnsonae)).